Reading from the N-terminus, the 892-residue chain is Translation initiation factor IF-2 (892 aa).

Basic and acidic residues-rich tracts occupy residues 93–159 and 166–216; these read VKRD…KDKV and DMTK…EENK. Residues 93–304 are disordered; it reads VKRDPQEAER…SSLQQGFQKP (212 aa). Residues 254–269 are compositionally biased toward basic residues; that stretch reads GRGRNAKAARPAKKGK. The span at 270–282 shows a compositional bias: basic and acidic residues; the sequence is HAESKADREEARA. Residues 391 to 560 enclose the tr-type G domain; it reads PRAPVVTIMG…LLQAEVLELK (170 aa). The interval 400 to 407 is G1; that stretch reads GHVDHGKT. 400–407 is a binding site for GTP; the sequence is GHVDHGKT. The tract at residues 425–429 is G2; that stretch reads GITQH. Residues 446 to 449 are G3; it reads DTPG. GTP-binding positions include 446–450 and 500–503; these read DTPGH and NKID. The G4 stretch occupies residues 500-503; it reads NKID. Residues 536 to 538 are G5; sequence SAK.

This sequence belongs to the TRAFAC class translation factor GTPase superfamily. Classic translation factor GTPase family. IF-2 subfamily.

Its subcellular location is the cytoplasm. One of the essential components for the initiation of protein synthesis. Protects formylmethionyl-tRNA from spontaneous hydrolysis and promotes its binding to the 30S ribosomal subunits. Also involved in the hydrolysis of GTP during the formation of the 70S ribosomal complex. This chain is Translation initiation factor IF-2, found in Salmonella gallinarum (strain 287/91 / NCTC 13346).